A 919-amino-acid chain; its full sequence is Sarcosine dehydrogenase, mitochondrial (919 aa).

The transit peptide at 1–22 (MASLSRVLRVAATCPRGRAAWN) directs the protein to the mitochondrion. The residue at position 38 (lysine 38) is an N6-succinyllysine. Histidine 109 carries the tele-8alpha-FAD histidine modification. Lysine 174 carries the post-translational modification N6-acetyllysine; alternate. An N6-succinyllysine; alternate modification is found at lysine 174. N6-succinyllysine occurs at positions 278, 378, 392, and 535. Residues lysine 560 and lysine 776 each carry the N6-acetyllysine modification. Tyrosine 778 bears the Phosphotyrosine mark. 3 positions are modified to N6-acetyllysine; alternate: lysine 803, lysine 885, and lysine 905. N6-succinyllysine; alternate occurs at positions 803, 885, and 905.

Belongs to the GcvT family. FAD serves as cofactor.

It localises to the mitochondrion matrix. The catalysed reaction is (6S)-5,6,7,8-tetrahydrofolyl-(gamma-L-Glu)(n) + sarcosine + oxidized [electron-transfer flavoprotein] + H(+) = (6R)-5,10-methylenetetrahydrofolyl-(gamma-L-Glu)(n) + reduced [electron-transfer flavoprotein] + glycine. It functions in the pathway amine and polyamine degradation; sarcosine degradation; formaldehyde and glycine from sarcosine: step 1/1. Functionally, catalyzes the last step of the oxidative degradation of choline to glycine. Converts sarcosine into glycine. The protein is Sarcosine dehydrogenase, mitochondrial of Mus musculus (Mouse).